A 510-amino-acid chain; its full sequence is Bifunctional purine biosynthesis protein PurH (510 aa).

Residues 1-142 (MRALISVSDK…KNFKDVLIVT (142 aa)) form the MGS-like domain.

Belongs to the PurH family.

The enzyme catalyses (6R)-10-formyltetrahydrofolate + 5-amino-1-(5-phospho-beta-D-ribosyl)imidazole-4-carboxamide = 5-formamido-1-(5-phospho-D-ribosyl)imidazole-4-carboxamide + (6S)-5,6,7,8-tetrahydrofolate. It catalyses the reaction IMP + H2O = 5-formamido-1-(5-phospho-D-ribosyl)imidazole-4-carboxamide. The protein operates within purine metabolism; IMP biosynthesis via de novo pathway; 5-formamido-1-(5-phospho-D-ribosyl)imidazole-4-carboxamide from 5-amino-1-(5-phospho-D-ribosyl)imidazole-4-carboxamide (10-formyl THF route): step 1/1. Its pathway is purine metabolism; IMP biosynthesis via de novo pathway; IMP from 5-formamido-1-(5-phospho-D-ribosyl)imidazole-4-carboxamide: step 1/1. This Campylobacter curvus (strain 525.92) protein is Bifunctional purine biosynthesis protein PurH.